A 203-amino-acid chain; its full sequence is Probable flagellin 1 (203 aa).

A propeptide spanning residues 1–11 is cleaved from the precursor; it reads MGMRFLKNEKG.

Belongs to the archaeal flagellin family.

It is found in the archaeal flagellum. Its function is as follows. Flagellin is the subunit protein which polymerizes to form the filaments of archaeal flagella. The protein is Probable flagellin 1 (flaB1) of Archaeoglobus fulgidus (strain ATCC 49558 / DSM 4304 / JCM 9628 / NBRC 100126 / VC-16).